The chain runs to 544 residues: Probable protein kinase UbiB (544 aa).

The chain crosses the membrane as a helical span at residues 1–21; the sequence is MIFGELRRLYLIIGVMLSYGL. One can recognise a Protein kinase domain in the interval 123 to 500; it reads DFQQEPLASA…HVRQSQSRFL (378 aa). ATP-binding positions include 129–137 and K151; that span reads LASASIAQV. The active-site Proton acceptor is the D286. 2 helical membrane passes run 499-519 and 520-540; these read FLFGIGATLLLIGTFLMTQGA and DEGSLPAWLMAAGTVSWIIGW.

The protein belongs to the ABC1 family. UbiB subfamily.

It is found in the cell inner membrane. It functions in the pathway cofactor biosynthesis; ubiquinone biosynthesis [regulation]. Its function is as follows. Is probably a protein kinase regulator of UbiI activity which is involved in aerobic coenzyme Q (ubiquinone) biosynthesis. The polypeptide is Probable protein kinase UbiB (Sodalis glossinidius (strain morsitans)).